Consider the following 402-residue polypeptide: Putative F-box/kelch-repeat protein At1g61540 (402 aa).

Positions Pro-24–Arg-70 constitute an F-box domain. 3 Kelch repeats span residues Asn-135–Asp-189, Lys-191–Ser-240, and Lys-246–Asn-293.

The protein is Putative F-box/kelch-repeat protein At1g61540 of Arabidopsis thaliana (Mouse-ear cress).